The chain runs to 347 residues: Phosphoribosylformylglycinamidine cyclo-ligase (347 aa).

Belongs to the AIR synthase family.

The protein resides in the cytoplasm. It carries out the reaction 2-formamido-N(1)-(5-O-phospho-beta-D-ribosyl)acetamidine + ATP = 5-amino-1-(5-phospho-beta-D-ribosyl)imidazole + ADP + phosphate + H(+). The protein operates within purine metabolism; IMP biosynthesis via de novo pathway; 5-amino-1-(5-phospho-D-ribosyl)imidazole from N(2)-formyl-N(1)-(5-phospho-D-ribosyl)glycinamide: step 2/2. The protein is Phosphoribosylformylglycinamidine cyclo-ligase of Prochlorococcus marinus (strain MIT 9215).